The sequence spans 286 residues: UDP-3-O-acyl-N-acetylglucosamine deacetylase (286 aa).

Residues His79, His237, and Asp241 each contribute to the Zn(2+) site. Residue His264 is the Proton donor of the active site.

This sequence belongs to the LpxC family. Zn(2+) serves as cofactor.

It carries out the reaction a UDP-3-O-[(3R)-3-hydroxyacyl]-N-acetyl-alpha-D-glucosamine + H2O = a UDP-3-O-[(3R)-3-hydroxyacyl]-alpha-D-glucosamine + acetate. The protein operates within glycolipid biosynthesis; lipid IV(A) biosynthesis; lipid IV(A) from (3R)-3-hydroxytetradecanoyl-[acyl-carrier-protein] and UDP-N-acetyl-alpha-D-glucosamine: step 2/6. Catalyzes the hydrolysis of UDP-3-O-myristoyl-N-acetylglucosamine to form UDP-3-O-myristoylglucosamine and acetate, the committed step in lipid A biosynthesis. This is UDP-3-O-acyl-N-acetylglucosamine deacetylase from Chlamydia muridarum (strain MoPn / Nigg).